The sequence spans 396 residues: KiSS-1 receptor (396 aa).

At 1-46 (MAAEATLGPNVSWWAPSNASGCPGCGVNASDGPGSAPRPLDAWLVP) the chain is on the extracellular side. Asparagine 10, asparagine 18, and asparagine 28 each carry an N-linked (GlcNAc...) asparagine glycan. A helical membrane pass occupies residues 47–67 (LFFAALMLLGLVGNSLVIFVI). Residues 68-90 (CRHKHMQTVTNFYIANLAATDVT) lie on the Cytoplasmic side of the membrane. A helical transmembrane segment spans residues 91–111 (FLLCCVPFTALLYPLPTWVLG). The Extracellular segment spans residues 112 to 120 (DFMCKFVNY). Cysteine 115 and cysteine 191 form a disulfide bridge. Residues 121–138 (IQQVSVQATCATLTAMSV) traverse the membrane as a helical segment. Over 139–159 (DRWYVTVFPLRALHRRTPRLA) the chain is Cytoplasmic. The chain crosses the membrane as a helical span at residues 160 to 180 (LTVSLSIWVGSAAVSAPVLAL). The Extracellular portion of the chain corresponds to 181-202 (HRLSPGPHTYCSEAFPSRALER). The chain crosses the membrane as a helical span at residues 203–223 (AFALYNLLALYLLPLLATCAC). Residues 224-264 (YGAMLRHLGRAAVRPAPTDGALQGQLLAQRAGAVRTKVSRL) lie on the Cytoplasmic side of the membrane. A helical membrane pass occupies residues 265–285 (VAAVVLLFAACWGPIQLFLVL). Topologically, residues 286 to 305 (QALGPSGAWHPRSYAAYALK) are extracellular. The chain crosses the membrane as a helical span at residues 306 to 326 (IWAHCMSYSNSALNPLLYAFL). At 327–396 (GSHFRQAFCR…SVQDEHTAPL (70 aa)) the chain is on the cytoplasmic side. The tract at residues 346-396 (RRPHASAHSDRAAPHSVPHSRAAHPVRVRTPEPGNPVRRSPSVQDEHTAPL) is disordered.

It belongs to the G-protein coupled receptor 1 family. In terms of tissue distribution, highest expression levels in the cerebrum and cecum. Moderate expression in the ovary, colon and placenta. Low levels in the uterus, small intestine, and thymus. Expressed only moderately in the placenta. No expression in kidney tissues. Has a complex and abundant central nervous system expression pattern. Expressed in brain regions such as pons, midbrain, thalamus, hypothalamus, hippocampus, amygdala, cortex, frontal cortex, and striatum. No expression in the cerebellum. Persistent expression is detected in hypothalamus throughout postnatal development, with maximum expression levels at puberty in both male and female. Hypothalamic expression changed throughout the estrus cycle and is significantly increased after gonadectomy, a rise that is prevented by sex steroid replacement both in males and females.

It localises to the cell membrane. Functionally, receptor for metastin, a C-terminally amidated peptide of KiSS1. KiSS1 is a metastasis suppressor protein. Activation of the receptor inhibits cell proliferation and cell migration, key characteristics of tumor metastasis. The receptor is essential for normal gonadotropin-released hormone physiology and for puberty. The hypothalamic KiSS1/KISS1R system is a pivotal factor in central regulation of the gonadotropic axis at puberty and in adulthood. Analysis of the transduction pathways activated by the receptor identifies coupling to phospholipase C and intracellular calcium release through pertussis toxin-insensitive G(q) proteins. The polypeptide is KiSS-1 receptor (Kiss1r) (Rattus norvegicus (Rat)).